The following is an 83-amino-acid chain: Greglin (83 aa).

A phosphoserine mark is found at S8, S11, and S15. Disulfide bonds link C21–C55, C25–C48, C33–C69, and C53–C76.

Functionally, serine protease inhibitor. Inhibits porcine pancreatic elastase with a Ki of 58.3 nM, human neutrophil elastase with a Ki of 3.6 nM, cathepsin G with a Ki of 153.5 nM, chymotrypsin with a Ki of 26.7 nM and subtilisin with a Ki of 0.68 nM. Does not inhibit neutrophil protease 3 or pancreatic trypsin. In Schistocerca gregaria (Desert locust), this protein is Greglin.